A 526-amino-acid chain; its full sequence is Probable DNA ligase (526 aa).

Glu-228 lines the ATP pocket. The active-site N6-AMP-lysine intermediate is the Lys-230. Positions 235, 250, 279, 319, 391, and 397 each coordinate ATP.

It belongs to the ATP-dependent DNA ligase family. Mg(2+) is required as a cofactor.

It catalyses the reaction ATP + (deoxyribonucleotide)n-3'-hydroxyl + 5'-phospho-(deoxyribonucleotide)m = (deoxyribonucleotide)n+m + AMP + diphosphate.. Functionally, DNA ligase that seals nicks in double-stranded DNA during DNA replication, DNA recombination and DNA repair. This chain is Probable DNA ligase, found in Mycobacterium avium (strain 104).